The following is a 514-amino-acid chain: 2,3-bisphosphoglycerate-independent phosphoglycerate mutase (514 aa).

2 residues coordinate Mn(2+): Asp-14 and Ser-64. The active-site Phosphoserine intermediate is Ser-64. Residues His-125, 155 to 156, Arg-187, Arg-193, 263 to 266, and Lys-337 contribute to the substrate site; these read RD and RADR. 5 residues coordinate Mn(2+): Asp-404, His-408, Asp-445, His-446, and His-464.

The protein belongs to the BPG-independent phosphoglycerate mutase family. Monomer. The cofactor is Mn(2+).

It catalyses the reaction (2R)-2-phosphoglycerate = (2R)-3-phosphoglycerate. It functions in the pathway carbohydrate degradation; glycolysis; pyruvate from D-glyceraldehyde 3-phosphate: step 3/5. Catalyzes the interconversion of 2-phosphoglycerate and 3-phosphoglycerate. The chain is 2,3-bisphosphoglycerate-independent phosphoglycerate mutase from Serratia proteamaculans (strain 568).